The following is a 426-amino-acid chain: Tyrosine--tRNA ligase (426 aa).

Tyrosine 38 is an L-tyrosine binding site. Residues 43 to 52 carry the 'HIGH' region motif; that stretch reads PTADSLHIGS. Residues tyrosine 176 and glutamine 180 each coordinate L-tyrosine. A 'KMSKS' region motif is present at residues 236 to 240; that stretch reads KFGKT. An ATP-binding site is contributed by lysine 239. The S4 RNA-binding domain maps to 359-426; the sequence is QTIVEVLTQS…KKLFNLYIWK (68 aa).

This sequence belongs to the class-I aminoacyl-tRNA synthetase family. TyrS type 1 subfamily. As to quaternary structure, homodimer.

The protein resides in the cytoplasm. The catalysed reaction is tRNA(Tyr) + L-tyrosine + ATP = L-tyrosyl-tRNA(Tyr) + AMP + diphosphate + H(+). Its function is as follows. Catalyzes the attachment of tyrosine to tRNA(Tyr) in a two-step reaction: tyrosine is first activated by ATP to form Tyr-AMP and then transferred to the acceptor end of tRNA(Tyr). The sequence is that of Tyrosine--tRNA ligase from Aliivibrio fischeri (strain ATCC 700601 / ES114) (Vibrio fischeri).